The primary structure comprises 209 residues: Imidazoleglycerol-phosphate dehydratase (209 aa).

The tract at residues 1-23 (MQLSDRPLTAPGTAPRQATVSRR) is disordered.

Belongs to the imidazoleglycerol-phosphate dehydratase family.

The protein resides in the cytoplasm. It catalyses the reaction D-erythro-1-(imidazol-4-yl)glycerol 3-phosphate = 3-(imidazol-4-yl)-2-oxopropyl phosphate + H2O. The protein operates within amino-acid biosynthesis; L-histidine biosynthesis; L-histidine from 5-phospho-alpha-D-ribose 1-diphosphate: step 6/9. The sequence is that of Imidazoleglycerol-phosphate dehydratase from Synechococcus elongatus (strain ATCC 33912 / PCC 7942 / FACHB-805) (Anacystis nidulans R2).